Reading from the N-terminus, the 356-residue chain is 1-deoxy-D-xylulose 5-phosphate reductoisomerase (356 aa).

Positions 7, 8, 9, 10, 31, 33, and 111 each coordinate NADPH. 1-deoxy-D-xylulose 5-phosphate is bound at residue Lys-112. Residue Glu-113 coordinates NADPH. Asp-131 is a Mn(2+) binding site. 1-deoxy-D-xylulose 5-phosphate contacts are provided by Ser-132, Glu-133, Ser-155, and His-178. Residue Glu-133 participates in Mn(2+) binding. Gly-184 contributes to the NADPH binding site. Positions 191, 196, 197, and 200 each coordinate 1-deoxy-D-xylulose 5-phosphate. Residue Glu-200 coordinates Mn(2+).

This sequence belongs to the DXR family. Mg(2+) is required as a cofactor. Mn(2+) serves as cofactor.

The catalysed reaction is 2-C-methyl-D-erythritol 4-phosphate + NADP(+) = 1-deoxy-D-xylulose 5-phosphate + NADPH + H(+). It functions in the pathway isoprenoid biosynthesis; isopentenyl diphosphate biosynthesis via DXP pathway; isopentenyl diphosphate from 1-deoxy-D-xylulose 5-phosphate: step 1/6. Catalyzes the NADPH-dependent rearrangement and reduction of 1-deoxy-D-xylulose-5-phosphate (DXP) to 2-C-methyl-D-erythritol 4-phosphate (MEP). This is 1-deoxy-D-xylulose 5-phosphate reductoisomerase from Campylobacter jejuni subsp. jejuni serotype O:23/36 (strain 81-176).